A 346-amino-acid chain; its full sequence is Biotin synthase (346 aa).

Positions 38-256 constitute a Radical SAM core domain; the sequence is RQVQVSTLLS…IAVARIMMPT (219 aa). Residues C53, C57, and C60 each contribute to the [4Fe-4S] cluster site. Residues C97, C128, C188, and R260 each coordinate [2Fe-2S] cluster.

The protein belongs to the radical SAM superfamily. Biotin synthase family. In terms of assembly, homodimer. Requires [4Fe-4S] cluster as cofactor. [2Fe-2S] cluster serves as cofactor.

The catalysed reaction is (4R,5S)-dethiobiotin + (sulfur carrier)-SH + 2 reduced [2Fe-2S]-[ferredoxin] + 2 S-adenosyl-L-methionine = (sulfur carrier)-H + biotin + 2 5'-deoxyadenosine + 2 L-methionine + 2 oxidized [2Fe-2S]-[ferredoxin]. It functions in the pathway cofactor biosynthesis; biotin biosynthesis; biotin from 7,8-diaminononanoate: step 2/2. Catalyzes the conversion of dethiobiotin (DTB) to biotin by the insertion of a sulfur atom into dethiobiotin via a radical-based mechanism. This Escherichia coli (strain SE11) protein is Biotin synthase.